Here is a 510-residue protein sequence, read N- to C-terminus: Aromatic-L-amino-acid decarboxylase (510 aa).

Over residues 1–17 (MSHIPISNTIPTKQTDG) the composition is skewed to polar residues. The interval 1 to 28 (MSHIPISNTIPTKQTDGNGKANISPDKL) is disordered. T117 provides a ligand contact to substrate. Pyridoxal 5'-phosphate-binding residues include A183, S184, H227, D305, and N334. Substrate is bound at residue H227. H227 is an active-site residue. K337 bears the N6-(pyridoxal phosphate)lysine mark. A disordered region spans residues 358-384 (NAFNVDPLYLKHDMQGSAPDYRHWQIP).

Belongs to the group II decarboxylase family. Homodimer. Requires pyridoxal 5'-phosphate as cofactor. In terms of tissue distribution, hypoderm isoform is expressed only in hypodermal epithelium and the CNS isoform only in central nervous system. Expressed in the adult head (at protein level).

The catalysed reaction is L-dopa + H(+) = dopamine + CO2. The enzyme catalyses 5-hydroxy-L-tryptophan + H(+) = serotonin + CO2. Catalyzes the decarboxylation of L-3,4-dihydroxyphenylalanine (L-DOPA) to dopamine and L-5-hydroxytryptophan (5-HTP) to serotonin. Catalyzes the formation of serotonin more efficiently than dopamine. Displays no activity to tyrosine. Variation in the synthesis of bioamines may be a factor contributing to natural variation in life span. The polypeptide is Aromatic-L-amino-acid decarboxylase (Ddc) (Drosophila melanogaster (Fruit fly)).